Consider the following 201-residue polypeptide: Recombination protein RecR (201 aa).

Residues 60 to 75 (CETCGNIDTRSPCTIC) form a C4-type zinc finger. Residues 83-178 (SIIVVVADVA…KVTRLAHGVP (96 aa)) enclose the Toprim domain.

Belongs to the RecR family.

In terms of biological role, may play a role in DNA repair. It seems to be involved in an RecBC-independent recombinational process of DNA repair. It may act with RecF and RecO. This Nitrobacter winogradskyi (strain ATCC 25391 / DSM 10237 / CIP 104748 / NCIMB 11846 / Nb-255) protein is Recombination protein RecR.